The following is a 268-amino-acid chain: MANSFLDSLTLVRQNTPLVQCLTNSVVMQFTANVLLAAGATPAMVDTPAESAEFAAVANGVLINAGTPSAEQYQGMTKAIEGARKAGTPWVLDPVAVGGLSERTKYAEGIVDKQPAAIRGNASEVVALAGLGAGGRGVDATDSVEAALEAAQLLAKRTGGVVAVSGAEDLIVSADRVTWLRSGDPMLQLVIGTGCSLGALTAAYLGATVDSDISAHDAVLAAHAHVGAAGQIAAQKASAPGSFAVAFIDALYDVDAQAVASLVDVREA.

Met44 contributes to the substrate binding site. ATP is bound by residues Arg119 and Ser165. Gly192 is a substrate binding site.

Belongs to the Thz kinase family. Mg(2+) is required as a cofactor.

The enzyme catalyses 5-(2-hydroxyethyl)-4-methylthiazole + ATP = 4-methyl-5-(2-phosphooxyethyl)-thiazole + ADP + H(+). Its pathway is cofactor biosynthesis; thiamine diphosphate biosynthesis; 4-methyl-5-(2-phosphoethyl)-thiazole from 5-(2-hydroxyethyl)-4-methylthiazole: step 1/1. Catalyzes the phosphorylation of the hydroxyl group of 4-methyl-5-beta-hydroxyethylthiazole (THZ). The chain is Hydroxyethylthiazole kinase from Corynebacterium glutamicum (strain R).